Here is a 313-residue protein sequence, read N- to C-terminus: Non-functional target of rapamycin complex subunit LST8-2 (313 aa).

WD repeat units lie at residues 1–35 (MFEN…CYFS), 38–76 (YPDL…PHIP), 82–121 (SHTK…CQRE), 123–162 (RSVS…CSCE), 166–205 (EVGT…QTMT), 215–255 (AHNS…LEKV), and 258–297 (GHER…EEMV).

Belongs to the WD repeat LST8 family.

Probable non-functional protein. The chain is Non-functional target of rapamycin complex subunit LST8-2 from Arabidopsis thaliana (Mouse-ear cress).